Reading from the N-terminus, the 309-residue chain is Tyrosine recombinase XerD (309 aa).

Residues 3–88 enclose the Core-binding (CB) domain; that stretch reads MRASLAIENF…ALRQFFRFLY (86 aa). Residues 109 to 302 form the Tyr recombinase domain; the sequence is PLPKIMSVEN…LEERLHKLVS (194 aa). Residues Arg-158, Lys-182, His-254, Arg-257, and His-280 contribute to the active site. Catalysis depends on Tyr-289, which acts as the O-(3'-phospho-DNA)-tyrosine intermediate.

The protein belongs to the 'phage' integrase family. XerD subfamily. As to quaternary structure, forms a cyclic heterotetrameric complex composed of two molecules of XerC and two molecules of XerD.

Its subcellular location is the cytoplasm. In terms of biological role, site-specific tyrosine recombinase, which acts by catalyzing the cutting and rejoining of the recombining DNA molecules. The XerC-XerD complex is essential to convert dimers of the bacterial chromosome into monomers to permit their segregation at cell division. It also contributes to the segregational stability of plasmids. This chain is Tyrosine recombinase XerD, found in Brucella suis biovar 1 (strain 1330).